We begin with the raw amino-acid sequence, 194 residues long: Mitochondrial inner membrane protease ATP23 (194 aa).

The disordered stretch occupies residues 1–20 (MEDAAAPNSGSEFNPGARRG). Histidine 96 lines the Zn(2+) pocket. Glutamate 97 is an active-site residue. Position 100 (histidine 100) interacts with Zn(2+).

It belongs to the peptidase M76 family.

The protein resides in the mitochondrion inner membrane. Its function is as follows. Has a dual role in the assembly of mitochondrial ATPase. Acts as a protease that removes the N-terminal 10 residues of mitochondrial ATPase CF(0) subunit 6 (ATP6) at the intermembrane space side. Also involved in the correct assembly of the membrane-embedded ATPase CF(0) particle, probably mediating association of ATP6 with the subunit 9 ring. In Arabidopsis thaliana (Mouse-ear cress), this protein is Mitochondrial inner membrane protease ATP23.